The chain runs to 941 residues: Pre-mRNA-processing factor 6 (941 aa).

The disordered stretch occupies residues 1-79 (MNKKKKPFLG…DEDLNDTNYD (79 aa)). Over residues 39 to 65 (DANDPVDDRHAPPGKRTVGDQMKKNQA) the composition is skewed to basic and acidic residues. The segment covering 66–78 (ADDDDEDLNDTNY) has biased composition (acidic residues). The residue at position 143 (Ser143) is a Phosphoserine. A phosphothreonine mark is found at Thr180, Thr266, and Thr275. Ser279 bears the Phosphoserine mark. HAT repeat units lie at residues 384 to 416 (TDIR…LEEP), 418 to 444 (DARI…ARLE), 445 to 476 (TYEN…LEEA), 554 to 586 (NALE…FEKN), 588 to 620 (GTRE…SKWL), 622 to 654 (GDVP…LESE), 689 to 721 (GNIT…IEEQ), 723 to 755 (ELME…LEEK), and 855 to 887 (RKIT…FELQ).

Identified in the spliceosome B complex. Identified in the spliceosome C complex. Associates with the U5 snRNP particle. Component of the U4/U6-U5 tri-snRNP complex composed of the U4, U6 and U5 snRNAs and at least PRPF3, PRPF4, PRPF6, PRPF8, PRPF31, SNRNP200, TXNL4A, SNRNP40, DDX23, CD2BP2, PPIH, SNU13, EFTUD2, SART1 and USP39, LSm proteins LSm2-8 and Sm proteins. Interacts with ARAF1. Interacts with AR and NR3C1, but not ESR1, independently of the presence of hormones. Interacts with USH1G. Post-translationally, phosphorylated by PRP4K during spliceosome assembly.

The protein localises to the nucleus. It is found in the nucleoplasm. It localises to the nucleus speckle. Functionally, involved in pre-mRNA splicing as component of the U4/U6-U5 tri-snRNP complex, one of the building blocks of the spliceosome. Enhances dihydrotestosterone-induced transactivation activity of AR, as well as dexamethasone-induced transactivation activity of NR3C1, but does not affect estrogen-induced transactivation. This Rattus norvegicus (Rat) protein is Pre-mRNA-processing factor 6 (Prpf6).